The sequence spans 96 residues: Small ribosomal subunit protein bS6 (96 aa).

Belongs to the bacterial ribosomal protein bS6 family.

In terms of biological role, binds together with bS18 to 16S ribosomal RNA. The sequence is that of Small ribosomal subunit protein bS6 from Streptococcus uberis (strain ATCC BAA-854 / 0140J).